A 335-amino-acid chain; its full sequence is 34 kDa spicule matrix protein (335 aa).

Residues 1 to 17 form the signal peptide; it reads MKGLLLILASLVAIATG. The region spanning 29–194 is the C-type lectin domain; sequence SGASCYRYFN…ATAMRAFVCE (166 aa). A disulfide bond links C50 and C193. The disordered stretch occupies residues 199 to 335; it reads QNIPPGQQPG…QEAETDVTGS (137 aa). Gly residues predominate over residues 207-310; sequence PGFGGQQPGF…GGPQRPGMGG (104 aa). Positions 311 to 323 are enriched in low complexity; sequence QPNSPNPRFNRPR.

Belongs to the SM50 family. As to expression, embryo spicule.

Its subcellular location is the secreted. In terms of biological role, major matrix protein of the sea urchin embryo spicule which directs crystal growth in certain orientations and inhibit growth in others. This Lytechinus pictus (Painted sea urchin) protein is 34 kDa spicule matrix protein.